Here is a 173-residue protein sequence, read N- to C-terminus: Translation initiation factor IF-3 (173 aa).

It belongs to the IF-3 family. Monomer.

The protein localises to the cytoplasm. Its function is as follows. IF-3 binds to the 30S ribosomal subunit and shifts the equilibrium between 70S ribosomes and their 50S and 30S subunits in favor of the free subunits, thus enhancing the availability of 30S subunits on which protein synthesis initiation begins. This Bartonella bacilliformis (strain ATCC 35685 / KC583 / Herrer 020/F12,63) protein is Translation initiation factor IF-3.